The sequence spans 414 residues: MAKAKVKQDQSPSGSALGKAANSQKQTKKQKKKKFWKNHPKIAGKTSEAKTLFPLLPPKQPQEFSSNWKALQELLKPKLNPAAPATPSEKFPKKDQKVSEKKNGDPEPPKSTPKINGGITSVTPKEAKAPSQAPPTKAVEVKKEKKRKIKAEGTEQLDPPKKPQGGTQPEPPKVDIWFDDVDPDDIEAALGPEAGRIAREMQGVTETAPPTAEKVLVKEKAFEGLTRTVAMDCEMVGVGLDGEESMLARVSIVNLFGKCVYDKYVRPTERVTDYRTAVSGIRPDDIKNGEAFKDVQAEVAEILRGRTLVGHAVHNDLKILFLDHPKKAIRDTQKYKPFKEKVKSGRPSLKLLCEKILNVKVQTGEHCSVQDAQAAMRLYTMEKKCWEAAIKAKYAGVTAAKAKGPQKDKQPPAQ.

Residues 1–174 (MAKAKVKQDQ…GGTQPEPPKV (174 aa)) are disordered. Over residues 26–42 (QTKKQKKKKFWKNHPKI) the composition is skewed to basic residues. Composition is skewed to basic and acidic residues over residues 90–108 (KFPKKDQKVSEKKNGDPEP) and 150–161 (KAEGTEQLDPPK). In terms of domain architecture, Exonuclease spans 228 to 379 (TVAMDCEMVG…QDAQAAMRLY (152 aa)).

The protein belongs to the REXO4 family.

Its subcellular location is the nucleus. The polypeptide is RNA exonuclease 4 (rexo4) (Xenopus tropicalis (Western clawed frog)).